We begin with the raw amino-acid sequence, 62 residues long: Conorfamide-Tx1 (62 aa).

The first 19 residues, Met-1–Ala-19, serve as a signal peptide directing secretion. A propeptide spanning residues Thr-20 to Lys-26 is cleaved from the precursor. Residue Tyr-46 is modified to Tyrosine amide. Positions Gly-47–Phe-62 are excised as a propeptide.

The protein belongs to the FARP (FMRFamide related peptide) family. In terms of tissue distribution, expressed by the venom duct.

The protein resides in the secreted. Functionally, this peptide does not show activity on human and mouse sensory neuron-specific G-protein coupled receptors MRGPRX1. This chain is Conorfamide-Tx1, found in Conus textile (Cloth-of-gold cone).